The sequence spans 264 residues: 3-methyl-2-oxobutanoate hydroxymethyltransferase (264 aa).

Mg(2+) is bound by residues aspartate 45 and aspartate 84. 3-methyl-2-oxobutanoate contacts are provided by residues 45–46 (DS), aspartate 84, and lysine 112. A Mg(2+)-binding site is contributed by glutamate 114. Glutamate 181 (proton acceptor) is an active-site residue.

The protein belongs to the PanB family. Homodecamer; pentamer of dimers. Mg(2+) is required as a cofactor.

The protein resides in the cytoplasm. It catalyses the reaction 3-methyl-2-oxobutanoate + (6R)-5,10-methylene-5,6,7,8-tetrahydrofolate + H2O = 2-dehydropantoate + (6S)-5,6,7,8-tetrahydrofolate. It functions in the pathway cofactor biosynthesis; (R)-pantothenate biosynthesis; (R)-pantoate from 3-methyl-2-oxobutanoate: step 1/2. Its function is as follows. Catalyzes the reversible reaction in which hydroxymethyl group from 5,10-methylenetetrahydrofolate is transferred onto alpha-ketoisovalerate to form ketopantoate. The chain is 3-methyl-2-oxobutanoate hydroxymethyltransferase from Shewanella sp. (strain MR-4).